Here is a 421-residue protein sequence, read N- to C-terminus: Tyrosine--tRNA ligase (421 aa).

Tyr42 serves as a coordination point for L-tyrosine. The 'HIGH' region signature appears at 47-56; it reads CTAPSLHVGS. 2 residues coordinate L-tyrosine: Tyr179 and Gln183. The short motif at 239 to 243 is the 'KMSKS' region element; that stretch reads KMGKT. Residue Lys242 coordinates ATP. The 66-residue stretch at 354–419 folds into the S4 RNA-binding domain; the sequence is LGILAAFAKA…RKKHVLLRLA (66 aa).

Belongs to the class-I aminoacyl-tRNA synthetase family. TyrS type 1 subfamily. In terms of assembly, homodimer.

Its subcellular location is the cytoplasm. The catalysed reaction is tRNA(Tyr) + L-tyrosine + ATP = L-tyrosyl-tRNA(Tyr) + AMP + diphosphate + H(+). Its function is as follows. Catalyzes the attachment of tyrosine to tRNA(Tyr) in a two-step reaction: tyrosine is first activated by ATP to form Tyr-AMP and then transferred to the acceptor end of tRNA(Tyr). The polypeptide is Tyrosine--tRNA ligase (Beijerinckia indica subsp. indica (strain ATCC 9039 / DSM 1715 / NCIMB 8712)).